Reading from the N-terminus, the 701-residue chain is Polyribonucleotide nucleotidyltransferase (701 aa).

Aspartate 490 and aspartate 496 together coordinate Mg(2+). The region spanning proline 557–isoleucine 616 is the KH domain. One can recognise an S1 motif domain in the interval glycine 626–lysine 694.

Belongs to the polyribonucleotide nucleotidyltransferase family. It depends on Mg(2+) as a cofactor.

The protein localises to the cytoplasm. It catalyses the reaction RNA(n+1) + phosphate = RNA(n) + a ribonucleoside 5'-diphosphate. Involved in mRNA degradation. Catalyzes the phosphorolysis of single-stranded polyribonucleotides processively in the 3'- to 5'-direction. In Staphylococcus epidermidis (strain ATCC 12228 / FDA PCI 1200), this protein is Polyribonucleotide nucleotidyltransferase.